Reading from the N-terminus, the 304-residue chain is Killer cell immunoglobulin-like receptor 2DS5 (304 aa).

The N-terminal stretch at 1-21 (MSLMVISMACVAFFLLQGAWP) is a signal peptide. Residues 22 to 245 (HEGFRRKPSL…SETGNPRHLH (224 aa)) are Extracellular-facing. 2 Ig-like C2-type domains span residues 42 to 107 (EETV…VTHS) and 142 to 205 (GESV…FRDS). Intrachain disulfides connect Cys49–Cys100 and Cys149–Cys198. N-linked (GlcNAc...) asparagine glycans are attached at residues Asn67, Asn84, Asn178, and Asn223. A helical transmembrane segment spans residues 246-264 (VLIGTSVVKLPFTILLFFL). Over 265 to 304 (LHRWCSNKKNASVMDQGPAGNRTVNREDSDEQDHQEVSYA) the chain is Cytoplasmic. The tract at residues 275 to 304 (ASVMDQGPAGNRTVNREDSDEQDHQEVSYA) is disordered. Basic and acidic residues predominate over residues 288-304 (VNREDSDEQDHQEVSYA).

The protein belongs to the immunoglobulin superfamily. Interacts with TYROBP. Post-translationally, N-glycosylated, glycosylation varies depending on the allele which alters cell surface expression levels. Expressed on a discrete subset of peripheral blood NK cells.

The protein localises to the cell membrane. Its function is as follows. Activating natural killer (NK) receptor that recognizes C2 epitopes of HLA-C alleles. Bridging the innate and adaptive immune systems, NK cells express a number of cell surface receptors which either inhibit or stimulate their cytotoxicity. Able to activate NK cells citotoxicity and cytokine production such as IFNG. Receptor functions are attenuated even lost in some alleles, such as KIR2DS5*002 represented in this entry. The sequence is that of Killer cell immunoglobulin-like receptor 2DS5 from Homo sapiens (Human).